A 427-amino-acid chain; its full sequence is Serine--tRNA ligase (427 aa).

231 to 233 is an L-serine binding site; the sequence is TAE. 262 to 264 contacts ATP; that stretch reads RSE. Position 285 (Glu285) interacts with L-serine. 349–352 contacts ATP; that stretch reads EISS. Residue Ser385 participates in L-serine binding.

The protein belongs to the class-II aminoacyl-tRNA synthetase family. Type-1 seryl-tRNA synthetase subfamily. Homodimer. The tRNA molecule binds across the dimer.

The protein localises to the cytoplasm. The enzyme catalyses tRNA(Ser) + L-serine + ATP = L-seryl-tRNA(Ser) + AMP + diphosphate + H(+). The catalysed reaction is tRNA(Sec) + L-serine + ATP = L-seryl-tRNA(Sec) + AMP + diphosphate + H(+). It participates in aminoacyl-tRNA biosynthesis; selenocysteinyl-tRNA(Sec) biosynthesis; L-seryl-tRNA(Sec) from L-serine and tRNA(Sec): step 1/1. Functionally, catalyzes the attachment of serine to tRNA(Ser). Is also able to aminoacylate tRNA(Sec) with serine, to form the misacylated tRNA L-seryl-tRNA(Sec), which will be further converted into selenocysteinyl-tRNA(Sec). The protein is Serine--tRNA ligase of Sinorhizobium medicae (strain WSM419) (Ensifer medicae).